We begin with the raw amino-acid sequence, 514 residues long: RNA-binding region-containing protein 3 (514 aa).

A disordered region spans residues 1–26; that stretch reads MAGPEPPMPLSRGGPGSASLSPPRGD. A Phosphoserine modification is found at S21. One can recognise an RRM 1 domain in the interval 27–102; sequence RTLLVRHLPA…HTLVVEFAKE (76 aa). Disordered stretches follow at residues 106 to 133, 213 to 282, and 337 to 363; these read VHSP…EKKE, MPLH…VRKK, and ETQP…FGKI. S108 carries the post-translational modification Phosphoserine. Basic and acidic residues predominate over residues 115–133; the sequence is TEKKKRLDDTVENDKEKKE. A compositionally biased stretch (pro residues) spans 217–230; it reads APLPPTSPQPPEEP. S349 carries the post-translational modification Phosphoserine. Residues 418–501 form the RRM 2 domain; that stretch reads CRIYVKNLAR…KPMVVQFARS (84 aa).

In terms of assembly, component of the U11/U12 snRNPs that are part of the U12-type spliceosome. Found in a complex with m(7)G-capped U12 snRNA. Interacts with PDCD7.

It localises to the nucleus. Participates in pre-mRNA U12-dependent splicing, performed by the minor spliceosome which removes U12-type introns. U12-type introns comprises less than 1% of all non-coding sequences. Binds to the 3'-stem-loop of m(7)G-capped U12 snRNA. This is RNA-binding region-containing protein 3 (Rnpc3) from Mus musculus (Mouse).